The following is a 471-amino-acid chain: Thiohydroximate-O-sulfate sulfur/sulfate-lyase (nitrile-forming) NSP2 (471 aa).

One can recognise a Jacalin-type lectin domain in the interval 2–144; sequence VQKVEARGGE…LHSLGAYISS (143 aa). Kelch repeat units lie at residues 178–226, 231–277, 281–330, 332–379, 381–435, and 446–471; these read KIFS…VRMV, SLYV…SMTA, NVYV…VVQG, VWVV…VVGK, ILVF…GWSA, and GLVM…VDSA. The Proton donor role is filled by arginine 238. The a (Z)-N-(sulfonatooxy)alkanimidothioate site is built by arginine 238, serine 271, arginine 293, glycine 322, and valine 371. Arginine 293 acts as the Proton donor in catalysis. Fe(2+)-binding residues include glutamate 387, aspartate 391, and histidine 395. Tryptophan 433 is an a (Z)-N-(sulfonatooxy)alkanimidothioate binding site.

This sequence belongs to the jacalin lectin family. Fe(2+) serves as cofactor. In terms of tissue distribution, expressed only in seeds.

It catalyses the reaction a (Z)-N-(sulfonatooxy)alkanimidothioate = a nitrile + sulfur + sulfate. The catalysed reaction is (Z)-phenyl-N-(sulfonatooxy)methanimidothioate = phenylacetonitrile + sulfur + sulfate. It carries out the reaction (Z)-N-(sulfonatooxy)prop-2-enimidothioate = but-3-enenitrile + sulfur + sulfate. The enzyme catalyses (Z)-(indol-3-yl)-N-(sulfonatooxy)methanimidothioate = (indol-3-yl)acetonitrile + sulfur + sulfate. With respect to regulation, the presence of Fe(2+) supports lyase activity in a dose-dependent manner with both benzylglucosinolate and 2-propenylglucosinolate as substrates. More active at pH 7.4 than at pH 6. Functionally, specifier protein responsible for constitutive and herbivore-induced simple nitrile formation, especially in seeds. Promotes simple nitriles, but not epithionitrile or thiocyanate formation. Converts allylglucosinolate (allyl-GSL), 2-propenylglucosinolate (sinigrin), indol-3-ylmethylglucosinolate (glucobrassicin), benzylisothiocyanate and benzylglucosinolate (glucotropaeolin) to their corresponding simple nitriles in the presence of myrosinase. Catalyzes mainly the conversion of benzylisothiocyanate when benzylglucosinolate is used as the initial substrate of myrosinase. Involved in the regulation of glucosinolate content in seeds, during stratification and germination. This Arabidopsis thaliana (Mouse-ear cress) protein is Thiohydroximate-O-sulfate sulfur/sulfate-lyase (nitrile-forming) NSP2.